The primary structure comprises 666 residues: Protein OPG074 (666 aa).

The chain crosses the membrane as a helical span at residues V574–L596.

The protein belongs to the orthopoxvirus OPG074 family.

It localises to the membrane. This Homo sapiens (Human) protein is Protein OPG074 (OPG074).